Consider the following 257-residue polypeptide: MNINDIFLKRKKRWGIINRLRDSEEQADGSLTPSRRIALISDDKSFRELYAQVKTGNPNSFPGYEQKVEANRLKTGQQDAVVTGTCRIGGVKTAVAVMDKRFLMGSMGIAVGEKITRLTEYAMKRKLPLIIFAASGGARMQEGLFSLMQMAKTTAAIEKFKDAGGLFISYLTNPTTGGVSASFASLGDIIIAEPGALICFAGPRVIEQTIGQKLPEGFQHSEFLLEHGMIDMIVDRKDMKQTLSKILKMHVNTGGEA.

The CoA carboxyltransferase N-terminal domain occupies 1 to 257; the sequence is MNINDIFLKR…KMHVNTGGEA (257 aa).

It belongs to the AccD/PCCB family. In terms of assembly, acetyl-CoA carboxylase is a heterohexamer composed of biotin carboxyl carrier protein (AccB), biotin carboxylase (AccC) and two subunits each of ACCase subunit alpha (AccA) and ACCase subunit beta (AccD).

The protein localises to the cytoplasm. It carries out the reaction N(6)-carboxybiotinyl-L-lysyl-[protein] + acetyl-CoA = N(6)-biotinyl-L-lysyl-[protein] + malonyl-CoA. It participates in lipid metabolism; malonyl-CoA biosynthesis; malonyl-CoA from acetyl-CoA: step 1/1. Functionally, component of the acetyl coenzyme A carboxylase (ACC) complex. Biotin carboxylase (BC) catalyzes the carboxylation of biotin on its carrier protein (BCCP) and then the CO(2) group is transferred by the transcarboxylase to acetyl-CoA to form malonyl-CoA. In Lachnospira eligens (strain ATCC 27750 / DSM 3376 / VPI C15-48 / C15-B4) (Eubacterium eligens), this protein is Acetyl-coenzyme A carboxylase carboxyl transferase subunit beta 1.